Reading from the N-terminus, the 92-residue chain is UPF0223 protein Sez_0908 (92 aa).

It belongs to the UPF0223 family.

The sequence is that of UPF0223 protein Sez_0908 from Streptococcus equi subsp. zooepidemicus (strain MGCS10565).